The sequence spans 244 residues: tRNA (guanine-N(7)-)-methyltransferase (244 aa).

Positions 74, 99, 126, and 149 each coordinate S-adenosyl-L-methionine. Aspartate 149 is an active-site residue. Substrate is bound by residues lysine 153, aspartate 185, and 222–225; that span reads TKFE.

The protein belongs to the class I-like SAM-binding methyltransferase superfamily. TrmB family.

The catalysed reaction is guanosine(46) in tRNA + S-adenosyl-L-methionine = N(7)-methylguanosine(46) in tRNA + S-adenosyl-L-homocysteine. The protein operates within tRNA modification; N(7)-methylguanine-tRNA biosynthesis. Catalyzes the formation of N(7)-methylguanine at position 46 (m7G46) in tRNA. The polypeptide is tRNA (guanine-N(7)-)-methyltransferase (Colwellia psychrerythraea (strain 34H / ATCC BAA-681) (Vibrio psychroerythus)).